The chain runs to 272 residues: 3-methyl-2-oxobutanoate hydroxymethyltransferase (272 aa).

Mg(2+) contacts are provided by aspartate 51 and aspartate 90. Residues aspartate 51 to serine 52, aspartate 90, and lysine 118 contribute to the 3-methyl-2-oxobutanoate site. Glutamate 120 contacts Mg(2+). Catalysis depends on glutamate 187, which acts as the Proton acceptor.

It belongs to the PanB family. In terms of assembly, homodecamer; pentamer of dimers. The cofactor is Mg(2+).

Its subcellular location is the cytoplasm. It carries out the reaction 3-methyl-2-oxobutanoate + (6R)-5,10-methylene-5,6,7,8-tetrahydrofolate + H2O = 2-dehydropantoate + (6S)-5,6,7,8-tetrahydrofolate. Its pathway is cofactor biosynthesis; (R)-pantothenate biosynthesis; (R)-pantoate from 3-methyl-2-oxobutanoate: step 1/2. Functionally, catalyzes the reversible reaction in which hydroxymethyl group from 5,10-methylenetetrahydrofolate is transferred onto alpha-ketoisovalerate to form ketopantoate. The protein is 3-methyl-2-oxobutanoate hydroxymethyltransferase of Xylella fastidiosa (strain 9a5c).